We begin with the raw amino-acid sequence, 55 residues long: ATP synthase F(0) complex subunit 8 (55 aa).

Residues 4 to 24 (LNPAPWFMIFMFTWAIFLTIL) traverse the membrane as a helical segment. The tract at residues 34–55 (PNEPSPQGMTTPKTAPWNWPWH) is disordered.

This sequence belongs to the ATPase protein 8 family. As to quaternary structure, component of the ATP synthase complex composed at least of ATP5F1A/subunit alpha, ATP5F1B/subunit beta, ATP5MC1/subunit c (homooctomer), MT-ATP6/subunit a, MT-ATP8/subunit 8, ATP5ME/subunit e, ATP5MF/subunit f, ATP5MG/subunit g, ATP5MK/subunit k, ATP5MJ/subunit j, ATP5F1C/subunit gamma, ATP5F1D/subunit delta, ATP5F1E/subunit epsilon, ATP5PF/subunit F6, ATP5PB/subunit b, ATP5PD/subunit d, ATP5PO/subunit OSCP. ATP synthase complex consists of a soluble F(1) head domain (subunits alpha(3) and beta(3)) - the catalytic core - and a membrane F(0) domain - the membrane proton channel (subunits c, a, 8, e, f, g, k and j). These two domains are linked by a central stalk (subunits gamma, delta, and epsilon) rotating inside the F1 region and a stationary peripheral stalk (subunits F6, b, d, and OSCP).

The protein localises to the mitochondrion membrane. In terms of biological role, subunit 8, of the mitochondrial membrane ATP synthase complex (F(1)F(0) ATP synthase or Complex V) that produces ATP from ADP in the presence of a proton gradient across the membrane which is generated by electron transport complexes of the respiratory chain. ATP synthase complex consist of a soluble F(1) head domain - the catalytic core - and a membrane F(1) domain - the membrane proton channel. These two domains are linked by a central stalk rotating inside the F(1) region and a stationary peripheral stalk. During catalysis, ATP synthesis in the catalytic domain of F(1) is coupled via a rotary mechanism of the central stalk subunits to proton translocation. In vivo, can only synthesize ATP although its ATP hydrolase activity can be activated artificially in vitro. Part of the complex F(0) domain. The sequence is that of ATP synthase F(0) complex subunit 8 from Gadus morhua (Atlantic cod).